Consider the following 308-residue polypeptide: Malate dehydrogenase (308 aa).

6-11 (GAGKVG) lines the NADP(+) pocket. Substrate contacts are provided by Arg-79 and Arg-85. Residues Asn-92 and 115–117 (TTN) each bind NADP(+). 2 residues coordinate substrate: Asn-117 and Arg-148. Residue His-172 is the Proton acceptor of the active site.

The protein belongs to the LDH/MDH superfamily. In terms of assembly, homotetramer.

The enzyme catalyses (S)-malate + NADP(+) = oxaloacetate + NADPH + H(+). The catalysed reaction is (S)-malate + NAD(+) = oxaloacetate + NADH + H(+). Catalyzes the reversible oxidation of malate to oxaloacetate. Can also oxidize tartrate. Can utilize both NAD and NADP. Catalytic efficiency for malate oxidation is 3-fold higher with NADP. This chain is Malate dehydrogenase (mdh), found in Aeropyrum pernix (strain ATCC 700893 / DSM 11879 / JCM 9820 / NBRC 100138 / K1).